Reading from the N-terminus, the 366-residue chain is Subtilisin-like protease het-Q2 (366 aa).

Positions 1-321 (MSAISHHSLS…RVLMALGEKT (321 aa)) constitute a Peptidase S8 domain. Asp35 (charge relay system) is an active-site residue. Positions 79–98 (DFCQPSPPGDRQGPPPQPHS) are disordered. A compositionally biased stretch (pro residues) spans 83-96 (PSPPGDRQGPPPQP). Residues His105 and Ser266 each act as charge relay system in the active site. A helical transmembrane segment spans residues 261–283 (LVSGSSFATPVVVSVAALVLAFV).

The protein belongs to the peptidase S8 family.

It localises to the membrane. Its function is as follows. Serine protease involved in heterokaryon incompatibility, a process that ensures that during spontaneous vegetative cell fusion, only compatible cells from the same colony survive (non-self-recognition). In P.anserina, the het-q locus exists as 2 incompatible alleles, het-Q1 (AC B2AXJ5) and het-Q2 (this entry). Prevents cell fusion with strains containing the gasdermin-like protein het-Q1 by mediating proteolytic cleavage and maturation of het-Q1 during the allorecognition process, thereby triggering cell death. This chain is Subtilisin-like protease het-Q2, found in Podospora anserina (Pleurage anserina).